The sequence spans 311 residues: MSTYVNDMWPGSPQEKDSPSTSRSGGSSRLSSRSRSRSFSRSSRSHSRVSSRFSSRSRCRRSRSRSRSRRRHQRKYRRYSRSYSRSRSRSRNRRYRERRYGFSRRYYRSPSRSRSRSRSRSRGRSYCGRAYAIARGQRYYGFGRTVYPEEHSRWRDRSRTRSRSRTPFRLSEKERMELLEIAKANAAKALGTTSIDLPASLRTVPVAKETSRGIGVSSNGAKPEVSILGLSEQNFQKANCQIMWVCSVLVDKVFIQTIRCLTGTCPSFLKRGIFMRDSTDGPKVMHRWESFVYSCKYCLGYVKMRFFRHSN.

Residues 1-125 (MSTYVNDMWP…RSRSRSRGRS (125 aa)) are disordered. Ser12 carries the post-translational modification Phosphoserine. The segment covering 20–31 (STSRSGGSSRLS) has biased composition (low complexity). Residues 32–123 (SRSRSRSFSR…RSRSRSRSRG (92 aa)) show a composition bias toward basic residues. Residues Ser109 and Ser111 each carry the phosphoserine modification. At Arg135 the chain carries Omega-N-methylarginine.

It belongs to the RSRP family. In terms of processing, phosphorylated. Phosphorylation at Ser-109 and Ser-111 mediates the interaction with spliceosome proteins.

It is found in the nucleus. Its function is as follows. Probably acts as a spliceosomal factor that contributes to spliceosome assembly and regulates the isoform switching of proteins such as PARP6. The chain is Arginine/serine-rich protein 1 (RSRP1) from Pongo abelii (Sumatran orangutan).